Here is a 315-residue protein sequence, read N- to C-terminus: ATP synthase gamma chain (315 aa).

This sequence belongs to the ATPase gamma chain family. As to quaternary structure, F-type ATPases have 2 components, CF(1) - the catalytic core - and CF(0) - the membrane proton channel. CF(1) has five subunits: alpha(3), beta(3), gamma(1), delta(1), epsilon(1). CF(0) has three main subunits: a, b and c.

The protein resides in the cellular thylakoid membrane. Produces ATP from ADP in the presence of a proton gradient across the membrane. The gamma chain is believed to be important in regulating ATPase activity and the flow of protons through the CF(0) complex. This is ATP synthase gamma chain from Synechococcus sp. (strain PCC 6716).